The chain runs to 214 residues: Ribosomal RNA small subunit methyltransferase G (214 aa).

S-adenosyl-L-methionine contacts are provided by residues Gly-81, Met-86, 132–133, and Arg-147; that span reads AE.

It belongs to the methyltransferase superfamily. RNA methyltransferase RsmG family.

Its subcellular location is the cytoplasm. The catalysed reaction is guanosine(527) in 16S rRNA + S-adenosyl-L-methionine = N(7)-methylguanosine(527) in 16S rRNA + S-adenosyl-L-homocysteine. In terms of biological role, specifically methylates the N7 position of guanine in position 527 of 16S rRNA. This Pseudomonas syringae pv. syringae (strain B728a) protein is Ribosomal RNA small subunit methyltransferase G.